Reading from the N-terminus, the 149-residue chain is UPF0178 protein NT01CX_0440 (149 aa).

It belongs to the UPF0178 family.

This chain is UPF0178 protein NT01CX_0440, found in Clostridium novyi (strain NT).